A 276-amino-acid chain; its full sequence is Rhomboid-type serine protease 2 (276 aa).

A run of 5 helical transmembrane segments spans residues 27 to 47 (LPLFTRATVLIIVLTWVLTLV), 77 to 97 (FPFIHLNIFHTILNIVAFTPL), 109 to 129 (TSVALFFGPFATIPGLIYVFV), 132 to 152 (FILHANTPVMGASMWVFLLLG), and 175 to 195 (WITPLLLVVVTAALLPSSSFL). Residue S144 is the Nucleophile of the active site. H197 is a catalytic residue. Residues 198–218 (LAGLLVGYGFGLGYLKFLAPP) traverse the membrane as a helical segment.

It belongs to the peptidase S54 family.

It localises to the golgi apparatus membrane. The protein localises to the golgi apparatus. It is found in the cis-Golgi network membrane. It carries out the reaction Cleaves type-1 transmembrane domains using a catalytic dyad composed of serine and histidine that are contributed by different transmembrane domains.. In terms of biological role, probable rhomboid-type serine protease that catalyzes intramembrane proteolysis. This chain is Rhomboid-type serine protease 2 (rbd-2), found in Neurospora crassa (strain ATCC 24698 / 74-OR23-1A / CBS 708.71 / DSM 1257 / FGSC 987).